An 804-amino-acid polypeptide reads, in one-letter code: DNA mismatch repair protein MutS (804 aa).

ATP is bound at residue 614–621 (GPNMAGKS).

The protein belongs to the DNA mismatch repair MutS family.

This protein is involved in the repair of mismatches in DNA. It is possible that it carries out the mismatch recognition step. This protein has a weak ATPase activity. The protein is DNA mismatch repair protein MutS of Ehrlichia chaffeensis (strain ATCC CRL-10679 / Arkansas).